The chain runs to 973 residues: Vacuolar protein sorting-associated protein 18 homolog (973 aa).

Residue alanine 2 is modified to N-acetylalanine. Phosphoserine is present on residues serine 3, serine 11, and serine 13. Residue lysine 362 is modified to N6-acetyllysine. Residues 454–481 adopt a coiled-coil conformation; sequence EEIALKFLEARQEEALAEFLQRKLASLK. The stretch at 618 to 772 is one CHCR repeat; sequence GSRLDARQLI…VVQEEEDVQT (155 aa). Serine 689 bears the Phosphoserine mark. A coiled-coil region spans residues 802 to 848; it reads KEAICSSLKAYNHHIQELQREMEEATASAQRIRRDLQELRGRYGTVE. The RING-type zinc finger occupies 853–947; the sequence is CATCDFPLLN…ELVAAECVYC (95 aa). Residues 903–929 are disordered; it reads GAAPPPAKGSARAKEAEGGAATAGPSR. Position 912 is a phosphoserine (serine 912).

This sequence belongs to the VPS18 family. As to quaternary structure, core component of at least two putative endosomal tethering complexes, the homotypic fusion and vacuole protein sorting (HOPS) complex and the class C core vacuole/endosome tethering (CORVET) complex. Their common core is composed of the class C Vps proteins VPS11, VPS16, VPS18 and VPS33A, which in HOPS further associates with VPS39 and VPS41 and in CORVET with VPS8 and TGFBRAP1. Interacts with RAB5C. Interacts with HOOK1. Interacts with STX7, MON1B. Associates with adaptor protein complex 3 (AP-3) and clathrin:AP-3 complexes. Interacts with SYNPO2. Interacts with PLEKHM1. Ubiquitous. Expression was highest in heart and low in lung.

It is found in the late endosome membrane. The protein localises to the lysosome membrane. It localises to the early endosome. The protein resides in the cytoplasmic vesicle. Its subcellular location is the autophagosome. It is found in the clathrin-coated vesicle. Its function is as follows. Plays a role in vesicle-mediated protein trafficking to lysosomal compartments including the endocytic membrane transport and autophagic pathways. Believed to act as a core component of the putative HOPS and CORVET endosomal tethering complexes which are proposed to be involved in the Rab5-to-Rab7 endosome conversion probably implicating MON1A/B, and via binding SNAREs and SNARE complexes to mediate tethering and docking events during SNARE-mediated membrane fusion. The HOPS complex is proposed to be recruited to Rab7 on the late endosomal membrane and to regulate late endocytic, phagocytic and autophagic traffic towards lysosomes. The CORVET complex is proposed to function as a Rab5 effector to mediate early endosome fusion probably in specific endosome subpopulations. Required for fusion of endosomes and autophagosomes with lysosomes. Involved in dendrite development of Pukinje cells. The chain is Vacuolar protein sorting-associated protein 18 homolog from Homo sapiens (Human).